The sequence spans 151 residues: Large ribosomal subunit protein bL9 (151 aa).

This sequence belongs to the bacterial ribosomal protein bL9 family.

Its function is as follows. Binds to the 23S rRNA. This chain is Large ribosomal subunit protein bL9, found in Lactobacillus delbrueckii subsp. bulgaricus (strain ATCC 11842 / DSM 20081 / BCRC 10696 / JCM 1002 / NBRC 13953 / NCIMB 11778 / NCTC 12712 / WDCM 00102 / Lb 14).